The following is a 105-amino-acid chain: Large ribosomal subunit protein bL21 (105 aa).

It belongs to the bacterial ribosomal protein bL21 family. In terms of assembly, part of the 50S ribosomal subunit. Contacts protein L20.

In terms of biological role, this protein binds to 23S rRNA in the presence of protein L20. This Rickettsia bellii (strain OSU 85-389) protein is Large ribosomal subunit protein bL21.